The chain runs to 641 residues: Probable potassium transport system protein Kup 4 (641 aa).

Transmembrane regions (helical) follow at residues 31–51 (AALG…LYTL), 64–84 (TASA…TISI), 119–139 (ILAV…VITP), 155–175 (GSLK…FFAA), 183–203 (IGAA…VLGL), 221–241 (AIGF…GVFL), 265–285 (WYAI…ALLI), 298–318 (LCPT…TIIA), 355–375 (IYVP…TIAF), 381–401 (LAGA…CLLF), 412–432 (LAVS…FFGA), and 437–457 (IAEG…LMLT).

This sequence belongs to the HAK/KUP transporter (TC 2.A.72) family.

It is found in the cell inner membrane. It carries out the reaction K(+)(in) + H(+)(in) = K(+)(out) + H(+)(out). Functionally, transport of potassium into the cell. Likely operates as a K(+):H(+) symporter. The chain is Probable potassium transport system protein Kup 4 from Bradyrhizobium sp. (strain BTAi1 / ATCC BAA-1182).